The primary structure comprises 151 residues: Large ribosomal subunit protein bL9 (151 aa).

Belongs to the bacterial ribosomal protein bL9 family.

In terms of biological role, binds to the 23S rRNA. The protein is Large ribosomal subunit protein bL9 of Francisella philomiragia subsp. philomiragia (strain ATCC 25017 / CCUG 19701 / FSC 153 / O#319-036).